The sequence spans 235 residues: Aspartate/glutamate leucyltransferase (235 aa).

The protein belongs to the R-transferase family. Bpt subfamily.

The protein localises to the cytoplasm. It catalyses the reaction N-terminal L-glutamyl-[protein] + L-leucyl-tRNA(Leu) = N-terminal L-leucyl-L-glutamyl-[protein] + tRNA(Leu) + H(+). It carries out the reaction N-terminal L-aspartyl-[protein] + L-leucyl-tRNA(Leu) = N-terminal L-leucyl-L-aspartyl-[protein] + tRNA(Leu) + H(+). Functionally, functions in the N-end rule pathway of protein degradation where it conjugates Leu from its aminoacyl-tRNA to the N-termini of proteins containing an N-terminal aspartate or glutamate. The protein is Aspartate/glutamate leucyltransferase of Pseudomonas syringae pv. syringae (strain B728a).